The following is a 377-amino-acid chain: Probable purine permease 22 (377 aa).

Transmembrane regions (helical) follow at residues 39-59 (WLRVSIYAIFVIFCQPLATVL), 71-91 (TYVVTLLQLIGFPVLILFRFF), 107-127 (SPSFTTLASVYLCTGLLVSAY), 128-148 (AYLSAVGLLYLPVSTFSLILA), 166-186 (FTPLIVNSLFLLTVSSALLVV), 202-222 (VIGFICTIGASAGIGLVLSLI), 238-258 (VLDLANYQSLVATCVVLIGLF), 283-303 (TLASAAIFWQVYTVGCVGLIF), 309-329 (FSNSITAVGLPIVPVVAVIVF), and 338-358 (IFSIILAIWGFLSFVYQHYLD).

This sequence belongs to the purine permeases (TC 2.A.7.14) family.

Its subcellular location is the membrane. This is Probable purine permease 22 (PUP22) from Arabidopsis thaliana (Mouse-ear cress).